We begin with the raw amino-acid sequence, 137 residues long: Methylglyoxal synthase (137 aa).

Residues M1–A137 enclose the MGS-like domain. Substrate is bound by residues H8, K12, T34–T37, and S54–G55. Residue D60 is the Proton donor/acceptor of the active site. Residue H87 participates in substrate binding.

This sequence belongs to the methylglyoxal synthase family.

It catalyses the reaction dihydroxyacetone phosphate = methylglyoxal + phosphate. Functionally, catalyzes the formation of methylglyoxal from dihydroxyacetone phosphate. This chain is Methylglyoxal synthase, found in Bacillus licheniformis (strain ATCC 14580 / DSM 13 / JCM 2505 / CCUG 7422 / NBRC 12200 / NCIMB 9375 / NCTC 10341 / NRRL NRS-1264 / Gibson 46).